The chain runs to 308 residues: Probable manganese-dependent inorganic pyrophosphatase (308 aa).

Residues histidine 9, aspartate 13, aspartate 15, aspartate 75, histidine 97, and aspartate 149 each coordinate Mn(2+).

The protein belongs to the PPase class C family. It depends on Mn(2+) as a cofactor.

The protein resides in the cytoplasm. It carries out the reaction diphosphate + H2O = 2 phosphate + H(+). The protein is Probable manganese-dependent inorganic pyrophosphatase of Bacillus pumilus (strain SAFR-032).